We begin with the raw amino-acid sequence, 207 residues long: ATP-dependent Clp protease proteolytic subunit (207 aa).

Ser111 (nucleophile) is an active-site residue. His136 is a catalytic residue.

This sequence belongs to the peptidase S14 family. As to quaternary structure, fourteen ClpP subunits assemble into 2 heptameric rings which stack back to back to give a disk-like structure with a central cavity, resembling the structure of eukaryotic proteasomes.

It is found in the cytoplasm. It catalyses the reaction Hydrolysis of proteins to small peptides in the presence of ATP and magnesium. alpha-casein is the usual test substrate. In the absence of ATP, only oligopeptides shorter than five residues are hydrolyzed (such as succinyl-Leu-Tyr-|-NHMec, and Leu-Tyr-Leu-|-Tyr-Trp, in which cleavage of the -Tyr-|-Leu- and -Tyr-|-Trp bonds also occurs).. Functionally, cleaves peptides in various proteins in a process that requires ATP hydrolysis. Has a chymotrypsin-like activity. Plays a major role in the degradation of misfolded proteins. The sequence is that of ATP-dependent Clp protease proteolytic subunit from Aliivibrio salmonicida (strain LFI1238) (Vibrio salmonicida (strain LFI1238)).